We begin with the raw amino-acid sequence, 686 residues long: Mannan-binding lectin serine protease 2 (686 aa).

Residues 1 to 15 (MRLLTLLGLLCGSVA) form the signal peptide. One can recognise a CUB 1 domain in the interval 16-137 (TPLGPKWPEP…TGFEAFYAAE (122 aa)). Ca(2+) contacts are provided by E67, D75, D120, S122, N123, D138, I139, and E141. A disulfide bridge connects residues C72 and C90. An EGF-like; calcium-binding domain is found at 138 to 181 (DIDECQVAPGEAPTCDHHCHNHLGGFYCSCRAGYVLHRNKRTCS). 12 disulfide bridges follow: C142-C156, C152-C165, C167-C180, C184-C211, C241-C259, C300-C348, C328-C361, C366-C412, C396-C430, C434-C552, C598-C618, and C629-C660. Residues N158, H159, and G162 each contribute to the Ca(2+) site. N158 is subject to (3R)-3-hydroxyasparagine. Residues 184–296 (CSGQVFTQRS…TGWKIHYTST (113 aa)) enclose the CUB 2 domain. Sushi domains lie at 298–363 (QPCP…ACSI) and 364–432 (VDCG…VCEP). Residues 445 to 684 (IYGGQKAKPG…YIPWIENIIS (240 aa)) form the Peptidase S1 domain. Residues H483 and D532 each act as charge relay system in the active site. The Charge relay system role is filled by S633.

It belongs to the peptidase S1 family. As to quaternary structure, homodimer; disulfide-linked. Binds MBL2. Isoform 2 binds to MASP1. Binds SERPING1. Dimerization and MBL2 binding requires calcium ions. Post-translationally, the iron and 2-oxoglutarate dependent 3-hydroxylation of aspartate and asparagine is (R) stereospecific within EGF domains. In terms of processing, activated by cleavage after Arg-444. The uncleaved zymogen is inactive towards synthetic substrates, but has sufficient activity to effect autocatalytic cleavage. In terms of tissue distribution, plasma.

Its subcellular location is the secreted. The catalysed reaction is Selective cleavage after Arg-223 in complement component C2 (-Ser-Leu-Gly-Arg-|-Lys-Ile-Gln-Ile) and after Arg-76 in complement component C4 (-Gly-Leu-Gln-Arg-|-Ala-Leu-Glu-Ile).. Its function is as follows. Serum protease that plays an important role in the activation of the complement system via mannose-binding lectin. After activation by auto-catalytic cleavage it cleaves C2 and C4, leading to their activation and to the formation of C3 convertase. This is Mannan-binding lectin serine protease 2 (MASP2) from Homo sapiens (Human).